Reading from the N-terminus, the 352-residue chain is Gap junction alpha-4 protein (352 aa).

Topologically, residues 2–23 (GDWEFLEKLLDQVQEHSTSIGK) are cytoplasmic. A helical transmembrane segment spans residues 24 to 46 (IWLMVLFIFRILILGLAGESVWG). The Extracellular portion of the chain corresponds to 47-76 (DEQSDFTCNTEQPGCTNVCYDKAFPISHVR). The chain crosses the membrane as a helical span at residues 77–99 (YWVLQFLFVSTPTLFYLGHVIYL). Residues 100–153 (SRKEEKLKQKESELRALDDKEQVEQAIAIIEKKKLKLYIQEDGTVKIKGALMYT) are Cytoplasmic-facing. Residues 154–176 (YLTSVIFKSIFEAGFLLGQWYLY) traverse the membrane as a helical segment. Topologically, residues 177–208 (GFVMTPIYVCERVPCPHKVDCFVSRPMEKTIF) are extracellular. Residues 209 to 231 (IIFMLVVSLISLFLNVLELIHLI) traverse the membrane as a helical segment. Residues 232–352 (CKSMIHALKK…SSSASKKQYV (121 aa)) lie on the Cytoplasmic side of the membrane. The tract at residues 332-352 (HSTVEKASTRASSSASKKQYV) is disordered. Low complexity predominate over residues 340 to 352 (TRASSSASKKQYV).

It belongs to the connexin family. Alpha-type (group II) subfamily. As to quaternary structure, a connexon is composed of a hexamer of connexins. Expressed in ovarian somatic cells, heart, leg muscle, liver and eye but not in brain.

Its subcellular location is the cell membrane. The protein resides in the cell junction. The protein localises to the gap junction. Functionally, one gap junction consists of a cluster of closely packed pairs of transmembrane channels, the connexons, through which materials of low MW diffuse from one cell to a neighboring cell. The sequence is that of Gap junction alpha-4 protein (gja4) from Xenopus laevis (African clawed frog).